The sequence spans 64 residues: Alpha-conotoxin SI (64 aa).

A signal peptide spans 1 to 21 (MGMRMMFTVFLLVVLATTVVS). Residues 22-49 (FPSDRASDGRDDEAKDERSDMHESDRKE) constitute a propeptide that is removed on maturation. Positions 23–47 (PSDRASDGRDDEAKDERSDMHESDR) are disordered. Over residues 26-47 (RASDGRDDEAKDERSDMHESDR) the composition is skewed to basic and acidic residues. 2 cysteine pairs are disulfide-bonded: Cys-51/Cys-56 and Cys-52/Cys-62. Cys-62 carries the cysteine amide modification.

This sequence belongs to the conotoxin A superfamily. Expressed by the venom duct.

It is found in the secreted. In terms of biological role, alpha-conotoxins act on postsynaptic membranes, they bind to the nicotinic acetylcholine receptors (nAChR) and thus inhibit them. Is active on muscle nAChR (IC(50)=113 nM on adult subtype (alpha-1-beta-1-gamma-delta/CHRNA1-CHRNB1-CHRNG-CHRND) and IC(50)=142 nM on fetal subtype (alpha-1-beta-1-delta-epsilon/CHRNA1-CHRNB1-CHRND-CHRNE)). On mice muscle receptors, its higher affinity site is the alpha/delta nAChR subunit interface. On Torpedo receptors, it does not distinguish between alpha/delta and alpha/gamma acetylcholine-binding sites. In vivo, causes paralysis followed by death when injected into goldfish. In contrast, has no effect on mice, when similar doses are intraperitoneally or intracerebrally injected. The polypeptide is Alpha-conotoxin SI (Conus striatus (Striated cone)).